The chain runs to 95 residues: 6 kDa early secretory antigenic target homolog (95 aa).

This sequence belongs to the WXG100 family. ESAT-6 subfamily. Forms a tight 1:1 complex with EsxB.

It localises to the secreted. Functionally, a secreted protein that might play a role in virulence. The protein is 6 kDa early secretory antigenic target homolog (esxA) of Mycobacterium leprae (strain TN).